Consider the following 161-residue polypeptide: Zinc metalloproteinase/disintegrin (161 aa).

The 72-residue stretch at 1–72 (ERDLLVAVTM…ENPQCILNKH (72 aa)) folds into the Peptidase M12B domain. His-12 provides a ligand contact to Zn(2+). Glu-13 is an active-site residue. 2 residues coordinate Zn(2+): His-16 and His-22. Disulfide bonds link Cys-27/Cys-51 and Cys-29/Cys-34. A propeptide spanning residues 73–88 (LRTDTVSTPVSGNELL) is cleaved from the precursor. The 73-residue stretch at 89-161 (EAGEECDCGT…ADCPRNRFHA (73 aa)) folds into the Disintegrin domain. 6 cysteine pairs are disulfide-bonded: Cys-94/Cys-109, Cys-96/Cys-104, Cys-103/Cys-126, Cys-117/Cys-123, Cys-122/Cys-147, and Cys-135/Cys-154. Residues 139 to 141 (RGD) carry the Cell attachment site motif.

This sequence belongs to the venom metalloproteinase (M12B) family. P-II subfamily. P-IIa sub-subfamily. Monomer. As to expression, expressed by the venom gland.

It is found in the secreted. In terms of biological role, impairs hemostasis in the envenomed animal. Functionally, disintegrin: inhibit platelet aggregation induced by ADP, thrombin, platelet-activating factor and collagen. Acts by inhibiting fibrinogen interaction with platelet receptors GPIIb/GPIIIa (ITGA2B/ITGB3). The protein is Zinc metalloproteinase/disintegrin of Bothrops jararaca (Jararaca).